A 245-amino-acid polypeptide reads, in one-letter code: Dehydrogenase/reductase SDR family member 6 (245 aa).

Residues 16-18, D37, and D58 each bind NAD(+); that span reads QGI. R144 contributes to the substrate binding site. The active-site Proton acceptor is the Y147. NAD(+) is bound by residues K151 and 180 to 184; that span reads VDTPS. Substrate contacts are provided by R188 and R205.

This sequence belongs to the short-chain dehydrogenases/reductases (SDR) family. In terms of assembly, homotetramer. As to expression, detected in liver (at protein level).

Its subcellular location is the cytoplasm. It catalyses the reaction cis-4-hydroxy-L-proline + NAD(+) = 4-oxo-L-proline + NADH + H(+). It carries out the reaction (R)-3-hydroxybutanoate + NAD(+) = acetoacetate + NADH + H(+). Its pathway is amino-acid metabolism. It functions in the pathway siderophore biosynthesis. In terms of biological role, NAD(H)-dependent dehydrogenase/reductase with a preference for cyclic substrates. Catalyzes stereoselective conversion of 4-oxo-L-proline to cis-4-hydroxy-L-proline, likely a detoxification mechanism for ketoprolines. Mediates the formation of 2,5-dihydroxybenzoate (2,5-DHBA), a siderophore that chelates free cytoplasmic iron and associates with LCN2, thereby regulating iron transport and homeostasis while protecting cells against free radical-induced oxidative stress. The iron-siderophore complex is imported into mitochondria, providing an iron source for mitochondrial metabolic processes in particular heme synthesis. May act as a 3-hydroxybutyrate dehydrogenase. This chain is Dehydrogenase/reductase SDR family member 6, found in Homo sapiens (Human).